We begin with the raw amino-acid sequence, 478 residues long: Multidrug resistance outer membrane protein MdtQ (478 aa).

A signal peptide spans 1 to 21; sequence MNRDSFYPAIACFPLLLMLAG. Cys-22 carries the N-palmitoyl cysteine lipid modification. A lipid anchor (S-diacylglycerol cysteine) is attached at Cys-22.

This sequence belongs to the outer membrane factor (OMF) (TC 1.B.17) family.

It localises to the cell outer membrane. Could be involved in resistance to puromycin, acriflavine and tetraphenylarsonium chloride. The chain is Multidrug resistance outer membrane protein MdtQ (mdtQ) from Escherichia coli O6:H1 (strain CFT073 / ATCC 700928 / UPEC).